Here is a 129-residue protein sequence, read N- to C-terminus: Serum amyloid A-2 protein (129 aa).

The signal sequence occupies residues M1 to S18. Q19 is modified (pyrrolidone carboxylic acid). The segment at G92–Y129 is disordered.

This sequence belongs to the SAA family. Apolipoprotein of the HDL complex. Expressed by the liver; secreted in plasma.

It localises to the secreted. In terms of biological role, major acute phase reactant. This is Serum amyloid A-2 protein (SAA2P0DJI9) from Neovison vison (American mink).